Reading from the N-terminus, the 244-residue chain is Transcription factor Sox-12 (244 aa).

A disordered region spans residues Met1 to Ser22. The segment at residues Ile31–Lys99 is a DNA-binding region (HMG box). Disordered stretches follow at residues Arg101–Thr137 and Gly152–Leu193. Polar residues-rich tracts occupy residues Ser120–Thr137 and His176–Ser186.

Expressed at a low level in embryos, and in the adult lung, ovary, skeletal muscle, testis, brain and heart.

The protein localises to the nucleus. Functionally, transcription factor that binds to the sequence 5'-AACAAT-3'. Acts as a transcriptional activator. The protein is Transcription factor Sox-12 (sox12) of Xenopus laevis (African clawed frog).